Here is a 199-residue protein sequence, read N- to C-terminus: Imidazole glycerol phosphate synthase subunit HisH (199 aa).

Residues 1–199 (MTVVVDYEMG…QILKNLREML (199 aa)) form the Glutamine amidotransferase type-1 domain. The active-site Nucleophile is the C79. Residues H180 and E182 contribute to the active site.

As to quaternary structure, heterodimer of HisH and HisF.

The protein localises to the cytoplasm. It carries out the reaction 5-[(5-phospho-1-deoxy-D-ribulos-1-ylimino)methylamino]-1-(5-phospho-beta-D-ribosyl)imidazole-4-carboxamide + L-glutamine = D-erythro-1-(imidazol-4-yl)glycerol 3-phosphate + 5-amino-1-(5-phospho-beta-D-ribosyl)imidazole-4-carboxamide + L-glutamate + H(+). The catalysed reaction is L-glutamine + H2O = L-glutamate + NH4(+). The protein operates within amino-acid biosynthesis; L-histidine biosynthesis; L-histidine from 5-phospho-alpha-D-ribose 1-diphosphate: step 5/9. IGPS catalyzes the conversion of PRFAR and glutamine to IGP, AICAR and glutamate. The HisH subunit catalyzes the hydrolysis of glutamine to glutamate and ammonia as part of the synthesis of IGP and AICAR. The resulting ammonia molecule is channeled to the active site of HisF. The polypeptide is Imidazole glycerol phosphate synthase subunit HisH (Carboxydothermus hydrogenoformans (strain ATCC BAA-161 / DSM 6008 / Z-2901)).